Consider the following 172-residue polypeptide: Cell division protein SepF (172 aa).

The tract at residues arginine 18–leucine 73 is disordered. Residues glutamate 22–tyrosine 40 show a composition bias toward acidic residues. Residues glutamine 48–alanine 59 are compositionally biased toward basic and acidic residues. Positions arginine 60–arginine 70 are enriched in basic residues.

This sequence belongs to the SepF family. In terms of assembly, homodimer. Interacts with FtsZ.

The protein localises to the cytoplasm. Functionally, cell division protein that is part of the divisome complex and is recruited early to the Z-ring. Probably stimulates Z-ring formation, perhaps through the cross-linking of FtsZ protofilaments. Its function overlaps with FtsA. The sequence is that of Cell division protein SepF from Cutibacterium acnes (strain DSM 16379 / KPA171202) (Propionibacterium acnes).